Reading from the N-terminus, the 123-residue chain is Large ribosomal subunit protein bL12 (123 aa).

The protein belongs to the bacterial ribosomal protein bL12 family. In terms of assembly, homodimer. Part of the ribosomal stalk of the 50S ribosomal subunit. Forms a multimeric L10(L12)X complex, where L10 forms an elongated spine to which 2 to 4 L12 dimers bind in a sequential fashion. Binds GTP-bound translation factors.

Forms part of the ribosomal stalk which helps the ribosome interact with GTP-bound translation factors. Is thus essential for accurate translation. The chain is Large ribosomal subunit protein bL12 from Bartonella tribocorum (strain CIP 105476 / IBS 506).